Reading from the N-terminus, the 84-residue chain is Large ribosomal subunit protein bL27 (84 aa).

Residues 1 to 25 (MAHKKAGGSSRNGRDSNGQRRGVKR) are disordered.

This sequence belongs to the bacterial ribosomal protein bL27 family.

This is Large ribosomal subunit protein bL27 from Desulfatibacillum aliphaticivorans.